The primary structure comprises 452 residues: Probable mannose-6-phosphate isomerase (452 aa).

Residues glutamine 141, histidine 143, glutamate 168, and histidine 295 each contribute to the Zn(2+) site. Arginine 314 is a catalytic residue.

Belongs to the mannose-6-phosphate isomerase type 1 family. Requires Zn(2+) as cofactor.

Its subcellular location is the cytoplasm. It catalyses the reaction D-mannose 6-phosphate = D-fructose 6-phosphate. The protein operates within nucleotide-sugar biosynthesis; GDP-alpha-D-mannose biosynthesis; alpha-D-mannose 1-phosphate from D-fructose 6-phosphate: step 1/2. In terms of biological role, involved in the synthesis of the GDP-mannose and dolichol-phosphate-mannose required for a number of critical mannosyl transfer reactions. The polypeptide is Probable mannose-6-phosphate isomerase (mpi) (Dictyostelium discoideum (Social amoeba)).